An 809-amino-acid polypeptide reads, in one-letter code: Endoplasmin homolog (809 aa).

The signal sequence occupies residues 1 to 18 (MRKWALSCALLLVLLLTT). The ATP site is built by Asn111, Asp155, Asn168, and Phe200. A glycan (N-linked (GlcNAc...) asparagine) is linked at Asn111. Over residues 293 to 320 (VPADEEESNEEEESTTETTEEEETEDDE) the composition is skewed to acidic residues. A disordered region spans residues 293 to 329 (VPADEEESNEEEESTTETTEEEETEDDEEKKPKTKTV). N-linked (GlcNAc...) asparagine glycans are attached at residues Asn410, Asn450, and Asn617. A disordered region spans residues 766–809 (SLDLSPDAAVEEEEEVEEPEVEEKESAKQEAEEPEHEQYDKDEL). The span at 774-788 (AVEEEEEVEEPEVEE) shows a compositional bias: acidic residues. The segment covering 789-809 (KESAKQEAEEPEHEQYDKDEL) has biased composition (basic and acidic residues). The short motif at 806 to 809 (KDEL) is the Prevents secretion from ER element.

It belongs to the heat shock protein 90 family.

Its subcellular location is the endoplasmic reticulum lumen. In terms of biological role, may have a molecular chaperone role in the processing of secreted materials. This Hordeum vulgare (Barley) protein is Endoplasmin homolog.